The following is a 254-amino-acid chain: MWQLLLPTALLLLVSAGMRAEDLPKAVVFLEPQWYRVLEKDSVTLKCQGAYSPEDNSTRWFHNESLISSQTSSYFIAAARVNNSGEYRCQTSLSTLSDPVQLEVHIGWLLLQAPRWVFKEEESIHLRCHSWKNTLLHKVTYLQNGKGRKYFHQNSDFYIPKATLKDSGSYFCRGLIGSKNVSSETVNITITQDLAVSSISSFFPPGYQVSFCLVMVLLFAVDTGLYFSVKKSVPSSTRDWEDHKFKWSKDPQDK.

A signal peptide spans 1-20 (MWQLLLPTALLLLVSAGMRA). Residues 21–206 (EDLPKAVVFL…SSISSFFPPG (186 aa)) lie on the Extracellular side of the membrane. Ig-like C2-type domains are found at residues 24–105 (PKAV…LEVH) and 107–189 (GWLL…VNIT). Intrachain disulfides connect C47-C89 and C128-C172. N-linked (GlcNAc...) asparagine glycosylation occurs at N187. Residues 207–229 (YQVSFCLVMVLLFAVDTGLYFSV) traverse the membrane as a helical segment. The Cytoplasmic portion of the chain corresponds to 230-254 (KKSVPSSTRDWEDHKFKWSKDPQDK).

In terms of assembly, forms a heterooligomeric complex with ITAM-containing signaling subunits, either a homodimer of CD247, a homodimer of FCER1G or a heterodimer of CD247 and FCER1G, to form a functional receptor complex. Interacts (via transmembrane domain) with signaling subunits; this interaction is a prerequisite for receptor complex expression on the cell surface and intracellular signal transduction. Binds the Fc region of antigen-complexed IgG with a preference for IgG1 and IgG3 isotypes. Interacts with CD2; this interaction is involved in NK cell activation and cytotoxicity. Interacts with S100A4; this interaction inhibits PKC-dependent phosphorylation of FCGR3A. In terms of processing, glycosylated. Glycosylation plays an inhibitory role in the interaction with IgG1 and IgG2. Post-translationally, undergoes rapid ectodomain shedding upon NK cell stimulation. The soluble form is produced by a proteolytic cleavage mediated by ADAM17. Repeated stimulation causes receptor shedding, a mechanism that allows for increased NK cell motility and detachment from opsonized target cells while avoiding activation-induced NK cell apoptosis. Lymphocytes and monocytes.

It localises to the cell membrane. The protein resides in the secreted. Its function is as follows. Receptor for the invariable Fc fragment of immunoglobulin gamma (IgG). Optimally activated upon binding of clustered antigen-IgG complexes displayed on cell surfaces, triggers lysis of antibody-coated cells, a process known as antibody-dependent cellular cytotoxicity (ADCC). Does not bind free monomeric IgG, thus avoiding inappropriate effector cell activation in the absence of antigenic trigger. Mediates IgG effector functions on natural killer (NK) cells. Binds antigen-IgG complexes generated upon infection and triggers NK cell-dependent cytokine production and degranulation to limit viral load and propagation. Involved in the generation of memory-like adaptive NK cells capable to produce high amounts of IFNG and to efficiently eliminate virus-infected cells via ADCC. Regulates NK cell survival and proliferation, in particular by preventing NK cell progenitor apoptosis. Fc-binding subunit that associates with CD247 and/or FCER1G adapters to form functional signaling complexes. Following the engagement of antigen-IgG complexes, triggers phosphorylation of immunoreceptor tyrosine-based activation motif (ITAM)-containing adapters with subsequent activation of phosphatidylinositol 3-kinase signaling and sustained elevation of intracellular calcium that ultimately drive NK cell activation. The ITAM-dependent signaling coupled to receptor phosphorylation by PKC mediates robust intracellular calcium flux that leads to production of pro-inflammatory cytokines, whereas in the absence of receptor phosphorylation it mainly activates phosphatidylinositol 3-kinase signaling leading to cell degranulation. Costimulates NK cells and trigger lysis of target cells independently of IgG binding. Mediates the antitumor activities of therapeutic antibodies. Upon ligation on monocytes triggers TNFA-dependent ADCC of IgG-coated tumor cells. Mediates enhanced ADCC in response to afucosylated IgGs. The protein is Low affinity immunoglobulin gamma Fc region receptor III-A of Macaca mulatta (Rhesus macaque).